The sequence spans 61 residues: Probable tautomerase lin2709 (61 aa).

P2 acts as the Proton acceptor; via imino nitrogen in catalysis.

The protein belongs to the 4-oxalocrotonate tautomerase family.

In Listeria innocua serovar 6a (strain ATCC BAA-680 / CLIP 11262), this protein is Probable tautomerase lin2709.